The following is a 288-amino-acid chain: MKNGAFPHDNAAVPNVERVLPLFSLKGRTAIVSGAGAGIGLAVAQAFAEAGANVAIWYNSNKQAVTSAEDIAKTYGVKCKAYQVNVTSAEAVDKAITEIIKEFNGRLDVFVANSGITWTEGAFIDGSVESARNVMSVNVDGVMWCAKSAGAHFRRQKEEGTTIDGKPLDNFIAGSFIATASMSGSIVNVPQLQAVYNSSKAAVIHFCKSLAVEWTGFARVNTVSPGYIITEISNFVPPETKTLWKDKIVMGREGRVGELKGAYLYLASDASSYTTGLDMIVDGGYSLP.

The NADP(+) site is built by isoleucine 39, asparagine 113, and lysine 147. Serine 181 functions as the Proton donor in the catalytic mechanism. Residues tyrosine 196, lysine 200, isoleucine 228, and threonine 230 each contribute to the NADP(+) site. Catalysis depends on tyrosine 196, which acts as the Proton acceptor. The active-site Lowers pKa of active site Tyr is lysine 200.

This sequence belongs to the short-chain dehydrogenases/reductases (SDR) family.

The enzyme catalyses xylitol + NADP(+) = L-xylulose + NADPH + H(+). Its pathway is carbohydrate degradation; L-arabinose degradation via L-arabinitol; D-xylulose 5-phosphate from L-arabinose (fungal route): step 3/5. In terms of biological role, L-xylulose reductase involved in the catabolism of L-arabinose through an oxidoreductive pathway. Catalyzes the NADPH-dependent reduction of L-xylulose. Is also able to convert D-xylulose, D-ribulose, L-sorbose, and D-fructose to their corresponding polyols. This Hypocrea jecorina (strain QM6a) (Trichoderma reesei) protein is L-xylulose reductase.